The following is a 313-amino-acid chain: tRNA dimethylallyltransferase (313 aa).

Residue 8-15 (GPTGTGKS) coordinates ATP. 10 to 15 (TGTGKS) lines the substrate pocket.

Belongs to the IPP transferase family. In terms of assembly, monomer. Mg(2+) serves as cofactor.

The enzyme catalyses adenosine(37) in tRNA + dimethylallyl diphosphate = N(6)-dimethylallyladenosine(37) in tRNA + diphosphate. In terms of biological role, catalyzes the transfer of a dimethylallyl group onto the adenine at position 37 in tRNAs that read codons beginning with uridine, leading to the formation of N6-(dimethylallyl)adenosine (i(6)A). This Mycolicibacterium gilvum (strain PYR-GCK) (Mycobacterium gilvum (strain PYR-GCK)) protein is tRNA dimethylallyltransferase.